Here is a 473-residue protein sequence, read N- to C-terminus: LETM1 domain-containing protein mdm28, mitochondrial (473 aa).

Residues 1–73 constitute a mitochondrion transit peptide; it reads MLRNRLFKTP…FYNIGSSRLY (73 aa). Topologically, residues 74–161 are mitochondrial intermembrane; the sequence is STETPTPSKV…LTRTLKDIGR (88 aa). A helical membrane pass occupies residues 162–182; it reads LVPFSVFVVVPFAELLLPIAV. At 183 to 473 the chain is on the mitochondrial matrix side; the sequence is KLFPNLLPST…ESNIPKNERK (291 aa). One can recognise a Letm1 RBD domain in the interval 205–398; the sequence is QLRKTRNEVS…LQDTLASIPD (194 aa). The tract at residues 430–473 is disordered; sequence EEEAEHVAEHPDLAKKQTEENKATSKPAVSAKSPESNIPKNERK. Over residues 434-452 the composition is skewed to basic and acidic residues; that stretch reads EHVAEHPDLAKKQTEENKA. Positions 462-473 are enriched in polar residues; that stretch reads SPESNIPKNERK.

Its subcellular location is the mitochondrion inner membrane. In terms of biological role, involved in mitochondrial potassium homeostasis through the mitochondrial K(+)/H(+) exchange regulation. The protein is LETM1 domain-containing protein mdm28, mitochondrial (mdm28) of Schizosaccharomyces pombe (strain 972 / ATCC 24843) (Fission yeast).